A 210-amino-acid polypeptide reads, in one-letter code: Protein-L-isoaspartate O-methyltransferase (210 aa).

Ser52 is an active-site residue.

It belongs to the methyltransferase superfamily. L-isoaspartyl/D-aspartyl protein methyltransferase family.

The protein localises to the cytoplasm. The catalysed reaction is [protein]-L-isoaspartate + S-adenosyl-L-methionine = [protein]-L-isoaspartate alpha-methyl ester + S-adenosyl-L-homocysteine. Functionally, catalyzes the methyl esterification of L-isoaspartyl residues in peptides and proteins that result from spontaneous decomposition of normal L-aspartyl and L-asparaginyl residues. It plays a role in the repair and/or degradation of damaged proteins. This is Protein-L-isoaspartate O-methyltransferase from Protochlamydia amoebophila (strain UWE25).